Consider the following 185-residue polypeptide: Ribosome-recycling factor (185 aa).

Belongs to the RRF family.

It localises to the cytoplasm. Responsible for the release of ribosomes from messenger RNA at the termination of protein biosynthesis. May increase the efficiency of translation by recycling ribosomes from one round of translation to another. The protein is Ribosome-recycling factor of Streptococcus pyogenes serotype M1.